We begin with the raw amino-acid sequence, 249 residues long: tRNA (guanine-N(1)-)-methyltransferase (249 aa).

S-adenosyl-L-methionine contacts are provided by residues glycine 113 and 132–137 (VGDFVV).

It belongs to the RNA methyltransferase TrmD family. As to quaternary structure, homodimer.

It is found in the cytoplasm. It catalyses the reaction guanosine(37) in tRNA + S-adenosyl-L-methionine = N(1)-methylguanosine(37) in tRNA + S-adenosyl-L-homocysteine + H(+). Its function is as follows. Specifically methylates guanosine-37 in various tRNAs. The chain is tRNA (guanine-N(1)-)-methyltransferase from Desulforudis audaxviator (strain MP104C).